Here is a 139-residue protein sequence, read N- to C-terminus: Large-conductance mechanosensitive channel 1 (139 aa).

3 helical membrane-spanning segments follow: residues 8–28 (FISK…AAFG), 30–50 (IVDS…FGGL), and 81–101 (GSFI…FLMV).

The protein belongs to the MscL family. Homopentamer.

Its subcellular location is the cell inner membrane. Functionally, channel that opens in response to stretch forces in the membrane lipid bilayer. May participate in the regulation of osmotic pressure changes within the cell. The protein is Large-conductance mechanosensitive channel 1 of Mesorhizobium japonicum (strain LMG 29417 / CECT 9101 / MAFF 303099) (Mesorhizobium loti (strain MAFF 303099)).